The primary structure comprises 135 residues: Nucleoside diphosphate kinase (135 aa).

ATP contacts are provided by lysine 9, phenylalanine 57, arginine 85, threonine 91, arginine 102, and asparagine 112. Histidine 115 (pros-phosphohistidine intermediate) is an active-site residue.

The protein belongs to the NDK family. As to quaternary structure, homotetramer. The cofactor is Mg(2+).

It localises to the cytoplasm. The catalysed reaction is a 2'-deoxyribonucleoside 5'-diphosphate + ATP = a 2'-deoxyribonucleoside 5'-triphosphate + ADP. It carries out the reaction a ribonucleoside 5'-diphosphate + ATP = a ribonucleoside 5'-triphosphate + ADP. In terms of biological role, major role in the synthesis of nucleoside triphosphates other than ATP. The ATP gamma phosphate is transferred to the NDP beta phosphate via a ping-pong mechanism, using a phosphorylated active-site intermediate. The sequence is that of Nucleoside diphosphate kinase from Thermobifida fusca (strain YX).